The primary structure comprises 287 residues: Iodotyrosine deiodinase (287 aa).

The chain crosses the membrane as a helical span at residues 15 to 34 (HWPSLFITLALIWIVKRLFF). FMN is bound by residues 96–100 (RRSIR), Ser125, and 125–126 (SG). The 3,5-diiodo-L-tyrosine site is built by Ala127, Glu154, Tyr158, and Lys179. The 3-iodo-L-tyrosine site is built by Ala127, Glu154, Tyr158, and Lys179. FMN-binding positions include 235-237 (VTT) and Arg277.

This sequence belongs to the nitroreductase family. As to quaternary structure, homodimer. Requires FMN as cofactor. In terms of tissue distribution, expressed in spermatocytes.

The protein localises to the cell membrane. It catalyses the reaction 2 iodide + L-tyrosine + 2 NADP(+) = 3,5-diiodo-L-tyrosine + 2 NADPH + H(+). The catalysed reaction is iodide + L-tyrosine + NADP(+) = 3-iodo-L-tyrosine + NADPH. The enzyme catalyses 3-iodo-L-tyrosine + iodide + NADP(+) = 3,5-diiodo-L-tyrosine + NADPH + H(+). It carries out the reaction L-tyrosine + chloride + NADP(+) = 3-chloro-L-tyrosine + NADPH. It catalyses the reaction bromide + L-tyrosine + NADP(+) = 3-bromo-L-tyrosine + NADPH. In terms of biological role, catalyzes the dehalogenation of halotyrosines such as 3-bromo-L-tyrosine, 3-chloro-L-tyrosine, 3-iodo-L-tyrosine and 3,5-diiodo-L-tyrosine. Activity towards 3-fluoro-L-tyrosine is weak. Important for male and female fertility. May be involved in maintaining the viability of sperm, both during development in the testes and storage in the female spermatheca. This chain is Iodotyrosine deiodinase, found in Drosophila melanogaster (Fruit fly).